Here is a 602-residue protein sequence, read N- to C-terminus: MEALKVWSLTATPLKQLLRLSSSSTRLATTIYGRRSYHLSPALRCASAASSSSSSATTAETSKPSGRNRRSASSSNSTSDREAIRSIRLKKVEELRGQGLEPYAYKWEKSHSANQLQEIYKHLANGEESDNEIDCVSIAGRVVARRAFGKLAFLTLRDDSGTIQLYCEKERLSDDQFEQLKQFIDIGDILGASGSMKRTEKGELSICVNSFSILTKSLLPLPDKYHGLTDIDKRYRQRYVDMIANPEVADVFRRRAKIVSEIRKTVESFGYLEVETPVLQGAAGGAEARPFVTFHNSLGRDLYLRIATELHLKRMLVGGFEKVYEIGRIFRNEGISTRHNPEFTTIEMYEAYSDYHSMMDMAELIVTQCSMAVNGKLTIDYQGTEICLERPWRRETMHNLVKEITGINFSELGEDLGNAKDTVLLALQDVLEPKDKSGIRACSSLGHLLNEIFEVVVEPKLVQPTFVLDYPIEISPLAKPHRGNAGLTERFELFICGREMANAFSELTDPVDQRTRLEEQVRQHNAKRAEAVRESPEPNAKKDDDDDESYEVTLDEDFLTALEYGMPPASGMGLGIDRLVMLLTNSASIRDVIAFPVLKLQQ.

The span at 50-62 (SSSSSSATTAETS) shows a compositional bias: low complexity. The segment at 50 to 83 (SSSSSSATTAETSKPSGRNRRSASSSNSTSDREA) is disordered. A DNA-binding region (OB) is located at residues 136 to 214 (VSIAGRVVAR…SICVNSFSIL (79 aa)). Substrate contacts are provided by G285 and E309. Residues 331–333 (RNE) and 339–340 (HN) contribute to the ATP site. Positions 347 and 349 each coordinate substrate. Ca(2+) is bound by residues E492 and E499. ATP is bound at residue 499-500 (EM). The substrate site is built by N502 and E506. Over residues 524–543 (HNAKRAEAVRESPEPNAKKD) the composition is skewed to basic and acidic residues. The disordered stretch occupies residues 524–550 (HNAKRAEAVRESPEPNAKKDDDDDESY). 575-578 (GIDR) is an ATP binding site.

Belongs to the class-II aminoacyl-tRNA synthetase family. The cofactor is Ca(2+).

It localises to the plastid. The protein localises to the chloroplast. It is found in the mitochondrion. The catalysed reaction is tRNA(Lys) + L-lysine + ATP = L-lysyl-tRNA(Lys) + AMP + diphosphate. Its function is as follows. Catalyzes the specific attachment of an amino acid to its cognate tRNA in a 2 step reaction: the amino acid (AA) is first activated by ATP to form AA-AMP and then transferred to the acceptor end of the tRNA. The protein is Lysine--tRNA ligase, chloroplastic/mitochondrial of Arabidopsis thaliana (Mouse-ear cress).